The primary structure comprises 318 residues: Cephalosporin-C deacetylase (318 aa).

Tyr-91 contacts substrate. Ser-181 serves as the catalytic Nucleophile. Residues Asp-269 and His-298 each act as charge relay system in the active site.

It belongs to the carbohydrate esterase 7 family. As to quaternary structure, homohexamer.

Its subcellular location is the cytoplasm. It carries out the reaction Deacetylation of xylans and xylo-oligosaccharides.. It catalyses the reaction cephalosporin C + H2O = deacetylcephalosporin C + acetate + H(+). Esterase that removed acetyl groups from a number of O-acetylated small substrates, such as acetylated xylose, short xylooligosaccharides and cephalosporin C. Has no activity towards polymeric acetylated xylan. Cannot cleave amide linkages. This chain is Cephalosporin-C deacetylase (cah), found in Bacillus subtilis (strain 168).